A 512-amino-acid chain; its full sequence is Oryzalexin E synthase (512 aa).

The chain crosses the membrane as a helical span at residues 6-26; that stretch reads SELWMTAVATCMSLLLYLTIL. Cys452 is a binding site for heme.

The protein belongs to the cytochrome P450 family. It depends on heme as a cofactor.

Its subcellular location is the membrane. It catalyses the reaction ent-sandaracopimaradien-3beta-ol + reduced [NADPH--hemoprotein reductase] + O2 = oryzalexin E + oxidized [NADPH--hemoprotein reductase] + H2O + H(+). In terms of biological role, enzyme of the diterpenoid metabolism involved in the biosynthesis of the oryzalexin class of phytoalexins. Can use ent-sandaracopimaradien and syn-stemodene as substrates, but no activity with syn-stemoden-19-oic acid. Hydroxylates 3-alpha-hydroxy-ent-sandaracopimaradiene at C-9-beta, resulting in a 3-alpha,9-beta-diol corresponding to oryzalexins E. The sequence is that of Oryzalexin E synthase from Oryza sativa subsp. japonica (Rice).